A 308-amino-acid polypeptide reads, in one-letter code: 1D-myo-inositol 2-acetamido-2-deoxy-alpha-D-glucopyranoside deacetylase (308 aa).

Histidine 37, aspartate 40, and histidine 171 together coordinate Zn(2+).

Belongs to the MshB deacetylase family. It depends on Zn(2+) as a cofactor.

It carries out the reaction 1D-myo-inositol 2-acetamido-2-deoxy-alpha-D-glucopyranoside + H2O = 1D-myo-inositol 2-amino-2-deoxy-alpha-D-glucopyranoside + acetate. Functionally, catalyzes the deacetylation of 1D-myo-inositol 2-acetamido-2-deoxy-alpha-D-glucopyranoside (GlcNAc-Ins) in the mycothiol biosynthesis pathway. This Mycobacterium sp. (strain KMS) protein is 1D-myo-inositol 2-acetamido-2-deoxy-alpha-D-glucopyranoside deacetylase.